A 368-amino-acid polypeptide reads, in one-letter code: DNA replication and repair protein RecF (368 aa).

30–37 (GDNGAGKT) contacts ATP.

This sequence belongs to the RecF family.

It localises to the cytoplasm. In terms of biological role, the RecF protein is involved in DNA metabolism; it is required for DNA replication and normal SOS inducibility. RecF binds preferentially to single-stranded, linear DNA. It also seems to bind ATP. The sequence is that of DNA replication and repair protein RecF from Xanthomonas axonopodis pv. citri (strain 306).